Reading from the N-terminus, the 197-residue chain is uncharacterized protein (197 aa).

6 helical membrane passes run 11-31 (AAMV…IPLI), 50-70 (ILAI…AYLG), 79-99 (AIVA…GLFA), 108-128 (AIVA…LGIM), 136-156 (ALKG…FIGL), and 158-178 (TLQI…AFHF).

The protein belongs to the chromate ion transporter (CHR) (TC 2.A.51) family.

It is found in the cell membrane. This is an uncharacterized protein from Bacillus subtilis (strain 168).